A 410-amino-acid chain; its full sequence is Lissencephaly-1 homolog (410 aa).

Residues 7 to 39 (QRDELNRAIADYLRSNGYEEAYSTFKKEAELDN) form the LisH domain. Residues 32–82 (KKEAELDNNEELDKKYAGLLEKKWTSVIRLQKKVMELESKLNEAKEEITLG) are a coiled coil. WD repeat units follow at residues 106–147 (GHRS…RTLK), 148–189 (GHTD…RTMH), 190–229 (GHDH…CVKT), 232–271 (GHRE…CKAE), 274–333 (EHEH…CLMT), 336–375 (GHDN…CMKT), and 378–410 (AHEH…WECR).

The protein belongs to the WD repeat LIS1/nudF family. As to quaternary structure, can self-associate. Component of the cytosolic PAF-AH (I) heterotetrameric enzyme, which is composed of PAFAH1B1 (beta), PAFAH1B2 (alpha2) and PAFAH1B3 (alpha1) subunits. The catalytic activity of the enzyme resides in the alpha1 (PAFAH1B3) and alpha2 (PAFAH1B2) subunits, whereas the beta subunit (PAFAH1B1) has regulatory activity. Trimer formation is not essential for the catalytic activity. Interacts with dynein, dynactin, nde1 and ndel1.

Its subcellular location is the cytoplasm. The protein localises to the cytoskeleton. It localises to the microtubule organizing center. The protein resides in the centrosome. Functionally, regulatory subunit (beta subunit) of the cytosolic type I platelet-activating factor (PAF) acetylhydrolase (PAF-AH (I)), an enzyme that catalyzes the hydrolyze of the acetyl group at the sn-2 position of PAF and its analogs and participates in the PAF inactivation. Positively regulates the activity of the minus-end directed microtubule motor protein dynein. May enhance dynein-mediated microtubule sliding by targeting dynein to the microtubule plus end. Required for several dynein- and microtubule-dependent processes such as the maintenance of Golgi integrity, the peripheral transport of microtubule fragments and the coupling of the nucleus and centrosome. May be required for proliferation of neuronal precursors and neuronal migration. The chain is Lissencephaly-1 homolog (pafah1b1) from Tetraodon nigroviridis (Spotted green pufferfish).